The chain runs to 373 residues: Septin homolog spn3 (373 aa).

The Septin-type G domain occupies 10–286 (KGIPLNLMVV…ETYRTEKLST (277 aa)). A G1 motif region spans residues 20 to 27 (GDVGLGRT). 20–27 (GDVGLGRT) lines the GTP pocket. The interval 79–82 (DTPH) is G3 motif. The tract at residues 161–164 (AKAD) is G4 motif. GTP contacts are provided by residues 162 to 170 (KADSLTAQE) and Arg235. Ser303 carries the post-translational modification Phosphoserine. A coiled-coil region spans residues 311 to 357 (EDRLRAIELSVQKEIEEKRRQLLAREEALRALEEKLAASTAAMANAS).

This sequence belongs to the TRAFAC class TrmE-Era-EngA-EngB-Septin-like GTPase superfamily. Septin GTPase family. As to quaternary structure, component of the septin complex composed of two copies of each spn1, spn2, spn3 and spn4.

The protein localises to the cytoplasm. It is found in the cell cortex. Its function is as follows. Plays a role in the cell cycle. Involved in a late stage of septum formation leading to the separation of the daughter cells. The sequence is that of Septin homolog spn3 (spn3) from Schizosaccharomyces pombe (strain 972 / ATCC 24843) (Fission yeast).